The sequence spans 275 residues: Penicillin-insensitive murein endopeptidase (275 aa).

Residues 1–19 form the signal peptide; the sequence is MKNWIVGMVALVTMVPVMA. 3 cysteine pairs are disulfide-bonded: Cys-44–Cys-264, Cys-187–Cys-235, and Cys-216–Cys-223. Residues His-110, His-113, Asp-120, Asp-147, and His-211 each contribute to the Zn(2+) site. Residues 227-262 are disordered; the sequence is DTPPPGDGCGAELESWFQPPPPSAKPGKTLPPPLPP. The segment covering 244–262 has biased composition (pro residues); that stretch reads QPPPPSAKPGKTLPPPLPP.

Belongs to the peptidase M74 family. In terms of assembly, dimer. It depends on Zn(2+) as a cofactor.

The protein localises to the periplasm. Its function is as follows. Murein endopeptidase that cleaves the D-alanyl-meso-2,6-diamino-pimelyl amide bond that connects peptidoglycan strands. Likely plays a role in the removal of murein from the sacculus. The chain is Penicillin-insensitive murein endopeptidase from Yersinia pestis.